The following is a 347-amino-acid chain: D-alanine--D-alanine ligase (347 aa).

Residues Lys138–Ala339 enclose the ATP-grasp domain. An ATP-binding site is contributed by Ser171–Phe226. Residues Asp296, Glu308, and Asn310 each coordinate Mg(2+).

This sequence belongs to the D-alanine--D-alanine ligase family. Mg(2+) serves as cofactor. It depends on Mn(2+) as a cofactor.

The protein localises to the cytoplasm. The catalysed reaction is 2 D-alanine + ATP = D-alanyl-D-alanine + ADP + phosphate + H(+). Its pathway is cell wall biogenesis; peptidoglycan biosynthesis. In terms of biological role, cell wall formation. This Tropheryma whipplei (strain TW08/27) (Whipple's bacillus) protein is D-alanine--D-alanine ligase.